The primary structure comprises 146 residues: Hemoglobin subunit beta-1 (146 aa).

S1 bears the N-acetylserine mark. The region spanning 2–146 is the Globin domain; sequence FLSAEEKGLV…VASALAHRYH (145 aa). K17 is modified (N6-succinyllysine). A phosphoserine mark is found at S44 and S50. Position 59 is an N6-succinyllysine (K59). Positions 63 and 92 each coordinate heme b. Residue R104 is modified to Asymmetric dimethylarginine.

It belongs to the globin family. Heterotetramer of two alpha chains and two beta chains. Red blood cells.

Functionally, involved in oxygen transport from the lung to the various peripheral tissues. The protein is Hemoglobin subunit beta-1 (HBB1) of Panthera leo (Lion).